A 267-amino-acid polypeptide reads, in one-letter code: Alkaline ceramidase 3 (267 aa).

Over 1-33 (MAPAADREGYWGPTTSTLDWCEENYSVTWYIAE) the chain is Cytoplasmic. The Ca(2+) site is built by D19, W20, E22, N24, and E33. A helical membrane pass occupies residues 34 to 55 (FWNTVSNLIMIIPPMFGAVQSV). Over 56 to 61 (RDGLEK) the chain is Lumenal. Residues 62–82 (RYIASYLALTVVGMGSWCFHM) form a helical membrane-spanning segment. H81 lines the Zn(2+) pocket. The Cytoplasmic segment spans residues 83-87 (TLKYE). The helical transmembrane segment at 88 to 108 (MQLLDELPMIYSCCIFVYCMF) threads the bilayer. At 109 to 118 (ECFKIKNSVN) the chain is on the lumenal side. The helical transmembrane segment at 119–139 (YHLLFTLVLFSLIVTTVYLKV) threads the bilayer. Topologically, residues 140-141 (KE) are cytoplasmic. The chain crosses the membrane as a helical span at residues 142–162 (PIFHQVMYGMLVFTLVLRSIY). At 163 to 173 (IVTWVYPWLRG) the chain is on the lumenal side. The helical transmembrane segment at 174-194 (LGYTSLGIFLLGFLFWNIDNI) threads the bilayer. At 195–215 (FCESLRNFRKKVPPIIGITTQ) the chain is on the cytoplasmic side. A helical transmembrane segment spans residues 216-236 (FHAWWHILTGLGSYLHILFSL). 2 residues coordinate Zn(2+): H217 and H221. Over 237–267 (YTRTLYLRYRPKVKFLFGIWPVILFEPLRKH) the chain is Lumenal.

The protein belongs to the alkaline ceramidase family. Zn(2+) is required as a cofactor. In terms of tissue distribution, ubiquitously expressed. Highly expressed in placenta. Expressed in erythrocytes.

It localises to the endoplasmic reticulum membrane. It is found in the golgi apparatus membrane. The enzyme catalyses an N-acyl-(4R)-4-hydroxysphinganine + H2O = (4R)-hydroxysphinganine + a fatty acid. It carries out the reaction N-(5Z,8Z,11Z,14Z-eicosatetraenoyl)-sphing-4-enine + H2O = sphing-4-enine + (5Z,8Z,11Z,14Z)-eicosatetraenoate. The catalysed reaction is N-(5Z,8Z,11Z,14Z-eicosatetraenoyl)-sphinganine + H2O = sphinganine + (5Z,8Z,11Z,14Z)-eicosatetraenoate. It catalyses the reaction N-(5Z,8Z,11Z,14Z-eicosatetraenoyl)-(4R)-hydroxysphinganine + H2O = (4R)-hydroxysphinganine + (5Z,8Z,11Z,14Z)-eicosatetraenoate. The enzyme catalyses N-(11Z-eicosenoyl)-sphing-4-enine + H2O = (11Z)-eicosenoate + sphing-4-enine. It carries out the reaction N-(11Z-eicosenoyl)-sphinganine + H2O = (11Z)-eicosenoate + sphinganine. The catalysed reaction is N-(11Z-eicosenoyl)-(4R)-hydroxysphinganine + H2O = (11Z)-eicosenoate + (4R)-hydroxysphinganine. It catalyses the reaction N-(9Z-octadecenoyl)-sphing-4-enine + H2O = sphing-4-enine + (9Z)-octadecenoate. The enzyme catalyses N-(9Z-octadecenoyl)-sphinganine + H2O = sphinganine + (9Z)-octadecenoate. It carries out the reaction N-(9Z-octadecenoyl)-(4R)-hydroxysphinganine + H2O = (4R)-hydroxysphinganine + (9Z)-octadecenoate. The catalysed reaction is an N-acylsphing-4-enine + H2O = sphing-4-enine + a fatty acid. It catalyses the reaction an N-acylsphinganine + H2O = sphinganine + a fatty acid. Its pathway is lipid metabolism; sphingolipid metabolism. Activated by 5 mM Ca(2+) and inhibited by 5 mM Zn(2+). Its function is as follows. Endoplasmic reticulum and Golgi ceramidase that catalyzes the hydrolysis of unsaturated long-chain C18:1-, C20:1- and C20:4-ceramides, dihydroceramides and phytoceramides into sphingoid bases like sphingosine and free fatty acids at alkaline pH. Ceramides, sphingosine, and its phosphorylated form sphingosine-1-phosphate are bioactive lipids that mediate cellular signaling pathways regulating several biological processes including cell proliferation, apoptosis and differentiation. Controls the generation of sphingosine in erythrocytes, and thereby sphingosine-1-phosphate in plasma. Through the regulation of ceramides and sphingosine-1-phosphate homeostasis in the brain may play a role in neurons survival and function. By regulating the levels of pro-inflammatory ceramides in immune cells and tissues, may modulate the inflammatory response. This Homo sapiens (Human) protein is Alkaline ceramidase 3 (ACER3).